We begin with the raw amino-acid sequence, 195 residues long: MARCKS-related protein (195 aa).

The disordered stretch occupies residues 1–195; it reads MGSQSSKAPR…PTPASAEQNE (195 aa). Glycine 2 is lipidated: N-myristoyl glycine. Position 14 is a phosphothreonine (threonine 14). The segment covering 16 to 26 has biased composition (low complexity); sequence EEAAGASPAKA. 4 positions are modified to phosphoserine: serine 22, serine 36, serine 41, and serine 48. The segment covering 53 to 64 has biased composition (low complexity); it reads GTDEAAGATGDA. Position 71 is a phosphoserine (serine 71). The segment covering 76–85 has biased composition (basic and acidic residues); that stretch reads AKGEVPPKET. Threonine 85 is subject to Phosphothreonine. Residues 86 to 98 are compositionally biased toward basic residues; the sequence is PKKKKKFSFKKPF. An effector domain involved in lipid-binding and calmodulin-binding region spans residues 87–110; that stretch reads KKKKKFSFKKPFKLSGLSFKRNRK. Residues serine 93, serine 101, serine 104, serine 119, serine 120, and serine 135 each carry the phosphoserine modification. Threonine 148 bears the Phosphothreonine mark. A phosphoserine mark is found at serine 151, serine 162, and serine 165. A compositionally biased stretch (low complexity) spans 153–195; that stretch reads EPQAKGAEASAASEEEAGPQATEPSTPSGPESGPTPASAEQNE. 2 positions are modified to phosphothreonine: threonine 178 and threonine 187.

It belongs to the MARCKS family. In terms of assembly, binds to filamentous actin (F-actin), but not to monomeric G-actin, independently of its phosphorylation status. In terms of processing, phosphorylated. Phosphorylation at Ser-120 and Thr-178 is non-redundantly catalyzed by MAPK8 in vivo. Phosphorylation at Thr-148 is preferentially catalyzed by MAPK8 in vivo, but this modification can also be catalyzed by other kinases in the absence of MAPK8. May be phosphorylated by protein kinase C, which disrupts the interaction with calmodulin.

The protein resides in the cytoplasm. It is found in the cytoskeleton. The protein localises to the cell membrane. Its function is as follows. Controls cell movement by regulating actin cytoskeleton homeostasis and filopodium and lamellipodium formation. When unphosphorylated, induces cell migration. When phosphorylated by MAPK8, induces actin bundles formation and stabilization, thereby reducing actin plasticity, hence restricting cell movement, including neuronal migration. May be involved in coupling the protein kinase C and calmodulin signal transduction systems. In Homo sapiens (Human), this protein is MARCKS-related protein (MARCKSL1).